The chain runs to 293 residues: Ethanolamine ammonia-lyase small subunit (293 aa).

V207 and E228 together coordinate adenosylcob(III)alamin.

The protein belongs to the EutC family. As to quaternary structure, the basic unit is a heterodimer which dimerizes to form tetramers. The heterotetramers trimerize; 6 large subunits form a core ring with 6 small subunits projecting outwards. It depends on adenosylcob(III)alamin as a cofactor.

The protein localises to the bacterial microcompartment. The catalysed reaction is ethanolamine = acetaldehyde + NH4(+). It participates in amine and polyamine degradation; ethanolamine degradation. In terms of biological role, catalyzes the deamination of various vicinal amino-alcohols to oxo compounds. Allows this organism to utilize ethanolamine as the sole source of nitrogen and carbon in the presence of external vitamin B12. This chain is Ethanolamine ammonia-lyase small subunit, found in Listeria monocytogenes serotype 4b (strain CLIP80459).